We begin with the raw amino-acid sequence, 66 residues long: Dermaseptin PD-3-7 (66 aa).

The first 22 residues, 1 to 22, serve as a signal peptide directing secretion; the sequence is MSFMKKSLLLVLFLGVVSLSNC. The propeptide occupies 23–40; sequence EEEKGENENEDHEEHHEE.

As to expression, expressed by the skin glands.

It localises to the secreted. Its function is as follows. Possesses a potent antimicrobial activity against Gram-positive and Gram-negative bacteria. Probably acts by disturbing membrane functions with its amphipathic structure. In Agalychnis dacnicolor (Giant Mexican leaf frog), this protein is Dermaseptin PD-3-7.